A 251-amino-acid polypeptide reads, in one-letter code: Phosphate import ATP-binding protein PstB 2 (251 aa).

In terms of domain architecture, ABC transporter spans 5-246 (ITTKDVHLYY…PDKEQTADYL (242 aa)). Residue 37–44 (GPSGCGKS) participates in ATP binding.

It belongs to the ABC transporter superfamily. Phosphate importer (TC 3.A.1.7) family. As to quaternary structure, the complex is composed of two ATP-binding proteins (PstB), two transmembrane proteins (PstC and PstA) and a solute-binding protein (PstS).

Its subcellular location is the cell membrane. It catalyses the reaction phosphate(out) + ATP + H2O = ADP + 2 phosphate(in) + H(+). Functionally, part of the ABC transporter complex PstSACB involved in phosphate import. Responsible for energy coupling to the transport system. This chain is Phosphate import ATP-binding protein PstB 2, found in Ligilactobacillus salivarius (strain UCC118) (Lactobacillus salivarius).